A 404-amino-acid chain; its full sequence is D-galactonate dehydratase family member PC1_0802 (404 aa).

N37 and H122 together coordinate substrate. Y159 (proton donor/acceptor) is an active-site residue. D212 contributes to the Mg(2+) binding site. Catalysis depends on H214, which acts as the Proton donor/acceptor. Residues E238 and E264 each coordinate Mg(2+). 5 residues coordinate substrate: E264, R285, H314, D318, and E341.

This sequence belongs to the mandelate racemase/muconate lactonizing enzyme family. GalD subfamily. Mg(2+) serves as cofactor.

It catalyses the reaction D-mannonate = 2-dehydro-3-deoxy-D-gluconate + H2O. Functionally, has low D-mannonate dehydratase activity (in vitro), suggesting that this is not a physiological substrate and that it has no significant role in D-mannonate degradation in vivo. Has no detectable activity with a panel of 70 other acid sugars (in vitro). This chain is D-galactonate dehydratase family member PC1_0802, found in Pectobacterium carotovorum subsp. carotovorum (strain PC1).